The sequence spans 156 residues: 6,7-dimethyl-8-ribityllumazine synthase (156 aa).

5-amino-6-(D-ribitylamino)uracil-binding positions include Phe24, 56–58, and 80–82; these read SFE and AVV. A (2S)-2-hydroxy-3-oxobutyl phosphate-binding site is contributed by 85-86; sequence ET. Residue His88 is the Proton donor of the active site. Phe113 contributes to the 5-amino-6-(D-ribitylamino)uracil binding site. A (2S)-2-hydroxy-3-oxobutyl phosphate-binding site is contributed by Arg127.

This sequence belongs to the DMRL synthase family.

It catalyses the reaction (2S)-2-hydroxy-3-oxobutyl phosphate + 5-amino-6-(D-ribitylamino)uracil = 6,7-dimethyl-8-(1-D-ribityl)lumazine + phosphate + 2 H2O + H(+). The protein operates within cofactor biosynthesis; riboflavin biosynthesis; riboflavin from 2-hydroxy-3-oxobutyl phosphate and 5-amino-6-(D-ribitylamino)uracil: step 1/2. Catalyzes the formation of 6,7-dimethyl-8-ribityllumazine by condensation of 5-amino-6-(D-ribitylamino)uracil with 3,4-dihydroxy-2-butanone 4-phosphate. This is the penultimate step in the biosynthesis of riboflavin. This is 6,7-dimethyl-8-ribityllumazine synthase from Thermococcus kodakarensis (strain ATCC BAA-918 / JCM 12380 / KOD1) (Pyrococcus kodakaraensis (strain KOD1)).